The chain runs to 706 residues: Axin-related protein (706 aa).

Residues 72 to 191 enclose the RGS domain; it reads SLNLLLDDQD…LQSDICKEYA (120 aa). Disordered stretches follow at residues 278 to 298, 400 to 482, and 585 to 605; these read MTDG…REIH, TPAN…GTSA, and STTL…GFST. Over residues 402-412 the composition is skewed to polar residues; the sequence is ANLSPRSQSPF. A compositionally biased stretch (low complexity) spans 453-462; it reads RSSVSSQLPR. Residues 624 to 706 enclose the DIX domain; that stretch reads GQGLAIVYYF…KIICKVERAC (83 aa).

Interacts with dvl2/dsh via DIX domains in both proteins. Forms a complex with ctnnb1/beta-catenin and gsk3b. Also forms heterodimers with mouse Axin1.

It localises to the cytoplasm. The protein resides in the cytoplasmic vesicle. Regulates the wnt signaling pathway by interacting with dvl2/dsh, which displaces gsk3b from the axnr-gsk3b complex and thus prevents degradation of ctnnb1/beta-catenin. This chain is Axin-related protein, found in Xenopus laevis (African clawed frog).